A 214-amino-acid polypeptide reads, in one-letter code: Octanoyltransferase (214 aa).

The BPL/LPL catalytic domain maps to 34-214; the sequence is GVQKELVWLL…KFNEIFSNFN (181 aa). Substrate contacts are provided by residues 73–80, 145–147, and 158–160; these read RGGKYTYH, AFG, and GVS. Catalysis depends on Cys-176, which acts as the Acyl-thioester intermediate.

This sequence belongs to the LipB family.

It is found in the cytoplasm. The enzyme catalyses octanoyl-[ACP] + L-lysyl-[protein] = N(6)-octanoyl-L-lysyl-[protein] + holo-[ACP] + H(+). The protein operates within protein modification; protein lipoylation via endogenous pathway; protein N(6)-(lipoyl)lysine from octanoyl-[acyl-carrier-protein]: step 1/2. Catalyzes the transfer of endogenously produced octanoic acid from octanoyl-acyl-carrier-protein onto the lipoyl domains of lipoate-dependent enzymes. Lipoyl-ACP can also act as a substrate although octanoyl-ACP is likely to be the physiological substrate. This chain is Octanoyltransferase, found in Ehrlichia chaffeensis (strain ATCC CRL-10679 / Arkansas).